The following is a 201-amino-acid chain: IMP cyclohydrolase (201 aa).

The protein belongs to the archaeal IMP cyclohydrolase family.

It carries out the reaction IMP + H2O = 5-formamido-1-(5-phospho-D-ribosyl)imidazole-4-carboxamide. Its pathway is purine metabolism; IMP biosynthesis via de novo pathway; IMP from 5-formamido-1-(5-phospho-D-ribosyl)imidazole-4-carboxamide: step 1/1. Functionally, catalyzes the cyclization of 5-formylamidoimidazole-4-carboxamide ribonucleotide to IMP. In Methanococcus maripaludis (strain C5 / ATCC BAA-1333), this protein is IMP cyclohydrolase.